The sequence spans 180 residues: Amnesiac neuropeptides (180 aa).

An N-terminal signal peptide occupies residues 1–32 (MRSFCCCFYPAAVALHCVLLFYTFFLLFRASA). Propeptides lie at residues 33-35 (LRR) and 152-180 (GRRS…GEMR). The disordered stretch occupies residues 155–180 (SVPRGQPKFSRENPRALSPSLLGEMR).

As to expression, enriched expression in the embryonic and larval nervous systems. Strongly expressed in two large neurons that project over all the lobes of the mushroom bodies.

The protein resides in the secreted. Its function is as follows. Required for associative learning and memory in adults. Expression pattern suggests a modulatory role in memory formation. Controls neurotransmitter-mediated signaling pathways associated with the structure of the larval peripheral nerve. The protein is Amnesiac neuropeptides (amn) of Drosophila melanogaster (Fruit fly).